The following is a 75-amino-acid chain: Putative sulfur carrier protein YrkI (75 aa).

The active-site Cysteine persulfide intermediate is C14.

The protein belongs to the sulfur carrier protein TusA family.

In Bacillus subtilis (strain 168), this protein is Putative sulfur carrier protein YrkI (yrkI).